The chain runs to 359 residues: Heat-inducible transcription repressor HrcA (359 aa).

Belongs to the HrcA family.

Negative regulator of class I heat shock genes (grpE-dnaK-dnaJ and groELS operons). Prevents heat-shock induction of these operons. In Sinorhizobium fredii (strain NBRC 101917 / NGR234), this protein is Heat-inducible transcription repressor HrcA.